The chain runs to 327 residues: uncharacterized protein (327 aa).

The tract at residues 12–31 (PLGTTKSYHMNTSTVSPPSP) is disordered. 2 consecutive transmembrane segments (helical) span residues 183-203 (VSSP…PVIL) and 292-312 (VGVG…GLLM).

It localises to the membrane. This is an uncharacterized protein from Arabidopsis thaliana (Mouse-ear cress).